Here is a 342-residue protein sequence, read N- to C-terminus: AM-toxin biosynthesis protein 12 (342 aa).

Positions 1 to 20 are cleaved as a signal peptide; sequence MSLLITSLAWGALLDPEVSS.

It participates in mycotoxin biosynthesis. Functionally, part of the gene clusters that mediate the biosynthesis of AM-toxins, host-selective toxins (HSTs) causing Alternaria blotch on apple, a worldwide distributed disease. AM-toxins are cyclic depsipeptides containing the 3 residues 2-hydroxy-isovaleric acid (2-HIV), dehydroalanine, L-alanine which are common for all 3 AM-toxins I to III. The fourth precursor is L-alpha-amino-methoxyphenyl-valeric acid (L-Amv) for AM-toxin I, L-alpha-amino-phenyl-valeric acid (L-Apv) for AM-toxin II, and L-alpha-amino-hydroxyphenyl-valeric acid (L-Ahv) for AM-toxin III. AM-toxins have two target sites for affecting susceptible apple cells; they cause invagination of the plasma membrane and electrolyte loss and chloroplast disorganization. The non-ribosomal peptide synthetase AMT1 contains 4 catalytic modules and is responsible for activation of each residue in AM-toxin. The aldo-keto reductase AMT2 catalyzes the conversion of 2-keto-isovaleric acid (2-KIV) to 2-hydroxy-isovaleric acid (2-HIV), one of the precursor residues incorporated by AMT1 during AM-toxin biosynthesis, by reduction of its ketone to an alcohol. The cytochrome P450 monooxygenase AMT3 and the thioesterase AMT4 are also important for AM-toxin production, but their exact function within the AM-toxin biosynthesis are not known yet. Up to 21 proteins (including AMT1 to AMT4) are predicted to be involved in AM-toxin biosynthesis since their expression ishighly up-regulated in AM-toxin-producing cultures. This is AM-toxin biosynthesis protein 12 from Alternaria alternata (Alternaria rot fungus).